The primary structure comprises 303 residues: Histone deacetylase HDT2 (303 aa).

Over residues 100–112 the composition is skewed to acidic residues; sequence EMDLDSEDEEEEL. Residues 100–282 form a disordered region; the sequence is EMDLDSEDEE…SGGSVPCKSC (183 aa). Positions 119–133 are enriched in basic and acidic residues; sequence ENGKADGKEEQKNQE. Residues 154 to 203 show a composition bias toward acidic residues; sequence DSDDSDEDESDDSDEDDSDDSDEGEGLSPDEGDDDSSDEDDTSDDDEEET. Positions 204-217 are enriched in basic and acidic residues; the sequence is PTPKKPEAGKKRGA. The C2H2-type zinc-finger motif lies at 277-300; the sequence is VPCKSCSKTFNSEMALQAHSKAKH.

The protein belongs to the histone deacetylase HD2 family. In terms of assembly, multimer. Possibly forms a homotrimer with HDT1 and/or HDT3.

The protein resides in the nucleus. It localises to the nucleolus. Functionally, mediates the deacetylation of lysine residues on the N-terminal part of the core histones (H2A, H2B, H3 and H4). Histone deacetylation gives a tag for epigenetic repression and plays an important role in transcriptional regulation, cell cycle progression and developmental events. The protein is Histone deacetylase HDT2 (HDT2) of Zea mays (Maize).